We begin with the raw amino-acid sequence, 58 residues long: Glutathione reductase (58 aa).

FAD contacts are provided by glutamate 5, threonine 12, cysteine 13, and lysine 21. Residues cysteine 13 and cysteine 18 are joined by a disulfide bond.

The protein belongs to the class-I pyridine nucleotide-disulfide oxidoreductase family. In terms of assembly, homodimer. FAD is required as a cofactor.

It is found in the cytoplasm. The catalysed reaction is 2 glutathione + NADP(+) = glutathione disulfide + NADPH + H(+). Catalyzes the reduction of glutathione disulfide (GSSG) to reduced glutathione (GSH). Constitutes the major mechanism to maintain a high GSH:GSSG ratio in the cytosol. The protein is Glutathione reductase of Spirulina sp.